The primary structure comprises 91 residues: Cytochrome b-c1 complex subunit 6, mitochondrial (91 aa).

Residues 1–13 (MGLEDEQKMLTES) constitute a mitochondrion transit peptide. Positions 1–30 (MGLEDEQKMLTESGDPEEEEEEEEELVDPL) are disordered. Residues 14-27 (GDPEEEEEEEEELV) are compositionally biased toward acidic residues. 2 cysteine pairs are disulfide-bonded: Cys-37–Cys-81 and Cys-53–Cys-67. Lys-42 is modified (N6-acetyllysine). The residue at position 85 (Lys-85) is an N6-acetyllysine.

It belongs to the UQCRH/QCR6 family. As to quaternary structure, component of the ubiquinol-cytochrome c oxidoreductase (cytochrome b-c1 complex, complex III, CIII), a multisubunit enzyme composed of 11 subunits. The complex is composed of 3 respiratory subunits cytochrome b, cytochrome c1 and Rieske protein UQCRFS1, 2 core protein subunits UQCRC1/QCR1 and UQCRC2/QCR2, and 6 low-molecular weight protein subunits UQCRH/QCR6, UQCRB/QCR7, UQCRQ/QCR8, UQCR10/QCR9, UQCR11/QCR10 and subunit 9, the cleavage product of Rieske protein UQCRFS1. The complex exists as an obligatory dimer and forms supercomplexes (SCs) in the inner mitochondrial membrane with NADH-ubiquinone oxidoreductase (complex I, CI) and cytochrome c oxidase (complex IV, CIV), resulting in different assemblies (supercomplex SCI(1)III(2)IV(1) and megacomplex MCI(2)III(2)IV(2)).

It localises to the mitochondrion inner membrane. Functionally, component of the ubiquinol-cytochrome c oxidoreductase, a multisubunit transmembrane complex that is part of the mitochondrial electron transport chain which drives oxidative phosphorylation. The respiratory chain contains 3 multisubunit complexes succinate dehydrogenase (complex II, CII), ubiquinol-cytochrome c oxidoreductase (cytochrome b-c1 complex, complex III, CIII) and cytochrome c oxidase (complex IV, CIV), that cooperate to transfer electrons derived from NADH and succinate to molecular oxygen, creating an electrochemical gradient over the inner membrane that drives transmembrane transport and the ATP synthase. The cytochrome b-c1 complex catalyzes electron transfer from ubiquinol to cytochrome c, linking this redox reaction to translocation of protons across the mitochondrial inner membrane, with protons being carried across the membrane as hydrogens on the quinol. In the process called Q cycle, 2 protons are consumed from the matrix, 4 protons are released into the intermembrane space and 2 electrons are passed to cytochrome c. This is Cytochrome b-c1 complex subunit 6, mitochondrial (UQCRH) from Homo sapiens (Human).